Reading from the N-terminus, the 252-residue chain is Chitooligosaccharide deacetylase (252 aa).

Mg(2+) is bound by residues His61 and His125.

This sequence belongs to the YdjC deacetylase family. ChbG subfamily. Homodimer. Requires Mg(2+) as cofactor.

The protein localises to the cytoplasm. It catalyses the reaction N,N'-diacetylchitobiose + H2O = N-acetyl-beta-D-glucosaminyl-(1-&gt;4)-D-glucosamine + acetate. It carries out the reaction diacetylchitobiose-6'-phosphate + H2O = N'-monoacetylchitobiose-6'-phosphate + acetate. The protein operates within glycan degradation; chitin degradation. Functionally, involved in the degradation of chitin. ChbG is essential for growth on the acetylated chitooligosaccharides chitobiose and chitotriose but is dispensable for growth on cellobiose and chitosan dimer, the deacetylated form of chitobiose. Deacetylation of chitobiose-6-P and chitotriose-6-P is necessary for both the activation of the chb promoter by the regulatory protein ChbR and the hydrolysis of phosphorylated beta-glucosides by the phospho-beta-glucosidase ChbF. Catalyzes the removal of only one acetyl group from chitobiose-6-P to yield monoacetylchitobiose-6-P, the inducer of ChbR and the substrate of ChbF. The chain is Chitooligosaccharide deacetylase from Klebsiella pneumoniae subsp. pneumoniae (strain ATCC 700721 / MGH 78578).